Reading from the N-terminus, the 267-residue chain is MLTVISPAKRLDWDVATPAGATLPEFQDEAMALVDVARELDVADLRKLMGLSEKLAVLNLDRFASFAEQADTETARPAALAFAGDTYTGLEARSLSDDEMAYAQDHLRILSGLYGVLRPLDLIQAYRLEMGSRLATPRGKTLYDWWGDRIATALNRAAEATDGRLLVNCASQEYFGAVDLSALSVPVVTPVFLEDRDGTTKTVSFFAKKARGAMARFIVQNRVRNLDGLRDFETGGYRFVPDQSTETAPVFVRPYPEAAPAARELAS.

Belongs to the UPF0246 family.

The polypeptide is UPF0246 protein Dshi_3333 (Dinoroseobacter shibae (strain DSM 16493 / NCIMB 14021 / DFL 12)).